The sequence spans 361 residues: 3-dehydroquinate synthase (361 aa).

It belongs to the archaeal-type DHQ synthase family.

The enzyme catalyses 2-amino-2,3,7-trideoxy-D-lyxo-hept-6-ulosonate + NAD(+) + H2O = 3-dehydroquinate + NH4(+) + NADH + H(+). In terms of biological role, catalyzes the oxidative deamination and cyclization of 2-amino-3,7-dideoxy-D-threo-hept-6-ulosonic acid (ADH) to yield 3-dehydroquinate (DHQ), which is fed into the canonical shikimic pathway of aromatic amino acid biosynthesis. This chain is 3-dehydroquinate synthase, found in Methanococcus maripaludis (strain C5 / ATCC BAA-1333).